The chain runs to 137 residues: Ribonuclease VapC27 (137 aa).

One can recognise a PINc domain in the interval 7-125 (VDTSVAIPLL…ATRDARAKDT (119 aa)). Positions 8 and 101 each coordinate Mg(2+).

The protein belongs to the PINc/VapC protein family. In terms of assembly, interacts with cognate antitoxin VapB27. Mg(2+) serves as cofactor.

The protein localises to the secreted. Probably the toxic component of a type II toxin-antitoxin (TA) system. An RNase. Its cognate antitoxin is VapB27. In Mycobacterium tuberculosis (strain ATCC 25618 / H37Rv), this protein is Ribonuclease VapC27.